The chain runs to 259 residues: Ribosomal RNA large subunit methyltransferase E (259 aa).

Residues Gly49, Trp51, Asp69, Asp88, and Asp112 each contribute to the S-adenosyl-L-methionine site. Catalysis depends on Lys152, which acts as the Proton acceptor. The TRAM domain maps to 199-257; sequence PIAEGDEHTVEIVDTGDEGDGIARIEGYTLFVDDAAEGDTVDVTVTDLKPNYGFAERRD.

It belongs to the class I-like SAM-binding methyltransferase superfamily. RNA methyltransferase RlmE family.

It is found in the cytoplasm. The catalysed reaction is uridine(2552) in 23S rRNA + S-adenosyl-L-methionine = 2'-O-methyluridine(2552) in 23S rRNA + S-adenosyl-L-homocysteine + H(+). In terms of biological role, specifically methylates the uridine in position 2552 of 23S rRNA at the 2'-O position of the ribose in the fully assembled 50S ribosomal subunit. The chain is Ribosomal RNA large subunit methyltransferase E from Halobacterium salinarum (strain ATCC 29341 / DSM 671 / R1).